The primary structure comprises 156 residues: Ribosomal RNA large subunit methyltransferase H (156 aa).

Residues Leu-72, Gly-104, and 123 to 128 (LSKMTL) each bind S-adenosyl-L-methionine.

It belongs to the RNA methyltransferase RlmH family. Homodimer.

It is found in the cytoplasm. It carries out the reaction pseudouridine(1915) in 23S rRNA + S-adenosyl-L-methionine = N(3)-methylpseudouridine(1915) in 23S rRNA + S-adenosyl-L-homocysteine + H(+). Specifically methylates the pseudouridine at position 1915 (m3Psi1915) in 23S rRNA. This is Ribosomal RNA large subunit methyltransferase H from Maridesulfovibrio salexigens (strain ATCC 14822 / DSM 2638 / NCIMB 8403 / VKM B-1763) (Desulfovibrio salexigens).